The chain runs to 353 residues: MKFLDEAKVYIRSGDGGNGCVAFRREKFIEFGGPNGGNGGRGGDIIVEAADGLNTLIDYRYQQHFKAQKGGNGMGSDRHGAGGKDIVMKVPVGTQIFDEDKETLIHDFTKVGERFVLAKGGNGGFGNAHFKSSTNRAPRHANPGLPGEERWIWLRLKLIADAGLVGLPNAGKSTFLSKVSAAKPKIADYPFTTLHPQLGVVNSDGREFVLADIPGLIEGAHEGAGLGDRFLGHIERCRVLLHLIDATCEHAGKAYKTVRGELEAYAETLVDKIEIVALNKIDAVEPDELKKQKDRLKRAAKKTPLLLSGVTGQGVPEVLRALVAVIGEAPVSDKAIGTADNPAEAKPWAPQDA.

The Obg domain occupies 1–159 (MKFLDEAKVY…RWIWLRLKLI (159 aa)). The 168-residue stretch at 160 to 327 (ADAGLVGLPN…VLRALVAVIG (168 aa)) folds into the OBG-type G domain. Residues 166-173 (GLPNAGKS), 191-195 (FTTLH), 212-215 (DIPG), 279-282 (NKID), and 308-310 (SGV) each bind GTP. Mg(2+)-binding residues include Ser-173 and Thr-193.

It belongs to the TRAFAC class OBG-HflX-like GTPase superfamily. OBG GTPase family. In terms of assembly, monomer. The cofactor is Mg(2+).

The protein resides in the cytoplasm. In terms of biological role, an essential GTPase which binds GTP, GDP and possibly (p)ppGpp with moderate affinity, with high nucleotide exchange rates and a fairly low GTP hydrolysis rate. Plays a role in control of the cell cycle, stress response, ribosome biogenesis and in those bacteria that undergo differentiation, in morphogenesis control. The polypeptide is GTPase Obg (Rhodopseudomonas palustris (strain TIE-1)).